The following is a 252-amino-acid chain: MAIRAAGTYVSKNKGAKRGKAKGKENRFSKNKFYNLTSRLFPITNHGTTSHPKMRSKQDLTPFLVGRTFSVNQGDLECADPMNAVNSPRYFKFKVNAVCGNNCNSVFNGMEVSREKITGMIRKWHTLIEANIPITTKDGSTWRVFVNAVTKKKNPDSLKHYAKASEIKIIRKRIVETTLEHLDGIEVEKLVKVLSTEGLAKEFETRCNEIYPIFAMIIKVKPIKNMQCIIVKTRSDDPAHLESDNKSDLENE.

It belongs to the eukaryotic ribosomal protein eS1 family. Component of the small ribosomal subunit. Mature ribosomes consist of a small (40S) and a large (60S) subunit. The 40S subunit contains about 33 different proteins and 1 molecule of RNA (18S). The 60S subunit contains about 49 different proteins and 3 molecules of RNA (25S, 5.8S and 5S).

Its subcellular location is the cytoplasm. This is Small ribosomal subunit protein eS1 from Enterocytozoon bieneusi (strain H348) (Microsporidian parasite).